The following is an 829-amino-acid chain: Protein Jade-1 (829 aa).

Polar residues predominate over residues 1 to 10 (MKRSRVPSTS). The disordered stretch occupies residues 1–40 (MKRSRVPSTSEDSDNGSNSTSWSQHSNSKHRKQSGKRPSE). Residues 15–26 (NGSNSTSWSQHS) are compositionally biased toward low complexity. The PHD-type 1 zinc finger occupies 196 to 246 (DVVCDVCQSPDGEDGNEMVFCDKCNICVHQACYGILKVPEGSWLCRTCALG). A C2HC pre-PHD-type zinc finger spans residues 248-282 (FPKCHLCPKKGGAMKPTRSGTKWVHVSCALWIPEV). A PHD-type 2 zinc finger spans residues 306-362 (LICCLCKEKTGACIQCSAKSCRVAFHVTCGLHCGLKMNTILTEADEVKFKSFCPKHS). Disordered regions lie at residues 368–408 (EEEG…PEET), 556–651 (PPVP…RRKS), and 697–829 (ATAP…VLAS). Basic and acidic residues predominate over residues 374–390 (DRPVKVPTREDRSRNRG). Composition is skewed to polar residues over residues 394 to 405 (SASSQTRLSQNP), 570 to 586 (GQNSTLSSSEKGSNSYR), and 607 to 619 (SGDSVRSETVMSA). Positions 622-648 (RRSEGRTRSGESHRKEEESERPLEDRR) are enriched in basic and acidic residues. Residues 697 to 714 (ATAPNMYSGSPRKTNASH) show a composition bias toward polar residues. Over residues 738 to 754 (KRSERTSAGRQTERQEA) the composition is skewed to basic and acidic residues. A compositionally biased stretch (low complexity) spans 762–774 (SSLKTFSTSPSSP). A compositionally biased stretch (basic and acidic residues) spans 782 to 792 (TGSENRRHLEE).

The protein belongs to the JADE family. Component of the HBO1 complex composed.

It localises to the nucleus. The protein resides in the chromosome. Its subcellular location is the cytoplasm. It is found in the cytoskeleton. The protein localises to the cilium basal body. In terms of biological role, scaffold subunit of some HBO1 complexes, which have a histone H4 acetyltransferase activity. Plays a key role in HBO1 complex by directing KAT7/HBO1 specificity towards histone H4 acetylation (H4K5ac, H4K8ac and H4K12ac), regulating DNA replication initiation, regulating DNA replication initiation. The protein is Protein Jade-1 (jade1) of Danio rerio (Zebrafish).